The chain runs to 493 residues: Cobyric acid synthase (493 aa).

The region spanning Pro-246–Phe-440 is the GATase cobBQ-type domain. Cys-326 acts as the Nucleophile in catalysis. His-432 is an active-site residue.

The protein belongs to the CobB/CobQ family. CobQ subfamily.

It participates in cofactor biosynthesis; adenosylcobalamin biosynthesis. In terms of biological role, catalyzes amidations at positions B, D, E, and G on adenosylcobyrinic A,C-diamide. NH(2) groups are provided by glutamine, and one molecule of ATP is hydrogenolyzed for each amidation. In Clostridium botulinum (strain Kyoto / Type A2), this protein is Cobyric acid synthase.